Here is a 280-residue protein sequence, read N- to C-terminus: ESX-1 secretion-associated protein EspJ (280 aa).

Ser-70 bears the Phosphoserine mark. Composition is skewed to low complexity over residues 167–181 (QTISQTAQQAAQSAQ) and 246–280 (PAQAMDTGAGARPAASPLAAPVDPSTPAPSTTTTL). Residues 167–280 (QTISQTAQQA…TPAPSTTTTL (114 aa)) are disordered.

In terms of processing, phosphorylated at Ser-70.

It localises to the secreted. Functionally, could be involved in regulation of growth and intracellular survival. This chain is ESX-1 secretion-associated protein EspJ, found in Mycobacterium tuberculosis (strain CDC 1551 / Oshkosh).